Reading from the N-terminus, the 90-residue chain is Phosphoribosyl-ATP pyrophosphatase (90 aa).

The protein belongs to the PRA-PH family.

The protein resides in the cytoplasm. The enzyme catalyses 1-(5-phospho-beta-D-ribosyl)-ATP + H2O = 1-(5-phospho-beta-D-ribosyl)-5'-AMP + diphosphate + H(+). It participates in amino-acid biosynthesis; L-histidine biosynthesis; L-histidine from 5-phospho-alpha-D-ribose 1-diphosphate: step 2/9. The chain is Phosphoribosyl-ATP pyrophosphatase from Streptomyces griseus subsp. griseus (strain JCM 4626 / CBS 651.72 / NBRC 13350 / KCC S-0626 / ISP 5235).